An 86-amino-acid chain; its full sequence is Large ribosomal subunit protein bL31B (86 aa).

The protein belongs to the bacterial ribosomal protein bL31 family. Type B subfamily. In terms of assembly, part of the 50S ribosomal subunit.

The protein is Large ribosomal subunit protein bL31B of Citrobacter koseri (strain ATCC BAA-895 / CDC 4225-83 / SGSC4696).